A 709-amino-acid polypeptide reads, in one-letter code: Zinc finger CCHC domain-containing protein 8 (709 aa).

The tract at residues Met-1–Val-47 is disordered. N-acetylalanine is present on Ala-2. Composition is skewed to acidic residues over residues Gly-8–Glu-20 and Asp-34–Gly-46. Residues Gly-48–Pro-83 adopt a coiled-coil conformation. Residues Pro-230–Met-247 form a CCHC-type zinc finger. 2 RBM7 binding regions span residues Phe-289–Leu-302 and Phe-312–Lys-327. Disordered stretches follow at residues Ile-409 to Leu-518 and Ala-533 to Lys-667. A compositionally biased stretch (low complexity) spans Gln-410 to Pro-430. Over residues Pro-468–Thr-499 the composition is skewed to pro residues. Phosphothreonine is present on residues Thr-474, Thr-482, Thr-488, and Thr-495. Over residues Leu-552 to Cys-562 the composition is skewed to polar residues. Ser-601 carries the phosphoserine modification. The span at Met-635–Pro-645 shows a compositional bias: polar residues. Phosphoserine is present on residues Ser-660 and Ser-697. Residues Pro-661–Glu-709 are MTREX binding.

It belongs to the ZCCHC8 family. As to quaternary structure, component of a nuclear TRAMP-like complex, an ATP-dependent exosome regulatory complex consisting of a helicase (MTREX), an oligadenylate polymerase (TENT4B or TENT4A), and a substrate specific RNA-binding factor (ZCCHC7 or ZCCHC8). Several TRAMP-like complexes exist with specific compositions and are associated with nuclear, or nucleolar RNA exosomes. Identified in the spliceosome C complex. Component of the nuclear exosome targeting (NEXT) complex composed of MTREX, ZCCHC8, and RBM7 that directs a subset of non-coding short-lived RNAs for exosomal degradation. Interacts with proteins involved in RNA processing and degradation such as MTREX and RBM7; interaction with MTREX enhances MTREX RNA helicase activity and bridges between RBM7 and MTREX. Interacts with TERC, the telomerase RNA component. Post-translationally, phosphorylation at Thr-495 by GSK3 is triggered in cells entering mitosis.

The protein resides in the nucleus. It localises to the nucleoplasm. Scaffolding subunit of the trimeric nuclear exosome targeting (NEXT) complex that is involved in the surveillance and turnover of aberrant transcripts and non-coding RNAs. NEXT functions as an RNA exosome cofactor that directs a subset of non-coding short-lived RNAs for exosomal degradation. May be involved in pre-mRNA splicing. It is required for 3'-end maturation of telomerase RNA component (TERC), TERC 3'-end targeting to the nuclear RNA exosome, and for telomerase function. The sequence is that of Zinc finger CCHC domain-containing protein 8 (Zcchc8) from Mus musculus (Mouse).